A 663-amino-acid polypeptide reads, in one-letter code: DNA topoisomerase 4 subunit B (663 aa).

ATP is bound by residues Tyr-7, Asn-47, Asp-74, 114-120 (GLHGVGA), and Lys-341. The tract at residues 386 to 416 (REAARKAREDARSGKKNKRKDTLLSGKLTPA) is disordered. The span at 387 to 398 (EAARKAREDARS) shows a compositional bias: basic and acidic residues. One can recognise a Toprim domain in the interval 424–538 (NELYLVEGDS…ADRVFIALPP (115 aa)). Residues Glu-430, Asp-503, and Asp-505 each contribute to the Mg(2+) site.

This sequence belongs to the type II topoisomerase family. ParE type 2 subfamily. As to quaternary structure, heterotetramer composed of ParC and ParE. Mg(2+) serves as cofactor. Mn(2+) is required as a cofactor. It depends on Ca(2+) as a cofactor.

The enzyme catalyses ATP-dependent breakage, passage and rejoining of double-stranded DNA.. Its function is as follows. Topoisomerase IV is essential for chromosome segregation. It relaxes supercoiled DNA. Performs the decatenation events required during the replication of a circular DNA molecule. This Staphylococcus aureus (strain MSSA476) protein is DNA topoisomerase 4 subunit B.